A 22-amino-acid polypeptide reads, in one-letter code: Odorant-binding protein 1 (22 aa).

This sequence belongs to the calycin superfamily. Lipocalin family. As to quaternary structure, homodimer. The N-terminus is blocked.

In terms of biological role, binds the chemical odorant, 2-isobutyl-3-methoxypyrazine. This Oryctolagus cuniculus (Rabbit) protein is Odorant-binding protein 1.